We begin with the raw amino-acid sequence, 102 residues long: MEYIYAALLLHSAGKEITEDAIKAVLSAAGVEVDDARVKALVAGLEGVDIEEAIANAAMPVAAAPAAAAPAAAAEEKKEEEKKEEKKEEDTAAVAGLAALFG.

The segment at 69–91 is disordered; sequence APAAAAEEKKEEEKKEEKKEEDT. Over residues 74–90 the composition is skewed to basic and acidic residues; the sequence is AEEKKEEEKKEEKKEED.

This sequence belongs to the eukaryotic ribosomal protein P1/P2 family. Part of the 50S ribosomal subunit. Homodimer, it forms part of the ribosomal stalk which helps the ribosome interact with GTP-bound translation factors. Forms a heptameric uL10/P0(P1)2(P1)2(P1)2 complex, where uL10/P0 forms an elongated spine to which the P1 dimers bind in a sequential fashion.

Functionally, forms part of the ribosomal stalk, playing a central role in the interaction of the ribosome with GTP-bound translation factors. This Methanocaldococcus jannaschii (strain ATCC 43067 / DSM 2661 / JAL-1 / JCM 10045 / NBRC 100440) (Methanococcus jannaschii) protein is Large ribosomal subunit protein P1.